Consider the following 233-residue polypeptide: Ciliary microtubule inner protein 6 (233 aa).

Composition is skewed to basic and acidic residues over residues 1 to 14 and 21 to 33; these read MEGEEKQQQHKTED and AERKVEIKNEKSP. The tract at residues 1-45 is disordered; sequence MEGEEKQQQHKTEDDGIACVAERKVEIKNEKSPGKSTQHPKPCVD. Residues 127 to 159 are mn; sequence GIVPLTSLDVSGEHENNFVEYISFIHQYDARRT. A disordered region spans residues 192-233; sequence LLNTLESGSSEQPQKTDKGNSSGDKVTSPGLCQQNSQELLET. The segment covering 195–233 has biased composition (polar residues); the sequence is TLESGSSEQPQKTDKGNSSGDKVTSPGLCQQNSQELLET.

The protein resides in the cell projection. It is found in the cilium. The protein is Ciliary microtubule inner protein 6 (Cimip6) of Mus musculus (Mouse).